We begin with the raw amino-acid sequence, 399 residues long: LEM domain-containing protein Bocksbeutel (399 aa).

An LEM domain is found at 4 to 48 (LSYLDTLGNKELLAKCLEHGLPGVPVTDSTRSVIIRRLKAKITGV). Disordered regions lie at residues 49–103 (PLNK…EQSR), 119–141 (SVQTTTTVSDMSSQSEDDDSYMV), and 233–287 (NSTS…SNLA). Polar residues-rich tracts occupy residues 68 to 77 (HGSQVTTPTS) and 89 to 99 (GRTSSNNNKIS). Polar residues predominate over residues 233 to 256 (NSTSYEESSTYNPKLSPISPRNTF). Residues 377–397 (FYLILVVSVMLATMVYVVLTP) form a helical membrane-spanning segment.

The protein localises to the nucleus inner membrane. The protein resides in the cytoplasm. It localises to the nucleus. Its subcellular location is the nucleoplasm. It is found in the endoplasmic reticulum. Its function is as follows. Inner nuclear membrane protein. May have a role in maintaining the structural integrity of the nuclear lamina. During pupal development, plays essential and redundant functions with the other LEM domain proteins; MAN1 and Ote. Also has a redundant but important role with Ote in larval development. The chain is LEM domain-containing protein Bocksbeutel from Drosophila melanogaster (Fruit fly).